The sequence spans 309 residues: Beta-ketoacyl-[acyl-carrier-protein] synthase III (309 aa).

Catalysis depends on residues Cys-111 and His-236. Residues Gln-237–Arg-241 are ACP-binding. Asn-266 is a catalytic residue.

Belongs to the thiolase-like superfamily. FabH family. In terms of assembly, homodimer.

The protein localises to the cytoplasm. It catalyses the reaction malonyl-[ACP] + acetyl-CoA + H(+) = 3-oxobutanoyl-[ACP] + CO2 + CoA. It participates in lipid metabolism; fatty acid biosynthesis. Functionally, catalyzes the condensation reaction of fatty acid synthesis by the addition to an acyl acceptor of two carbons from malonyl-ACP. Catalyzes the first condensation reaction which initiates fatty acid synthesis and may therefore play a role in governing the total rate of fatty acid production. Possesses both acetoacetyl-ACP synthase and acetyl transacylase activities. Its substrate specificity determines the biosynthesis of branched-chain and/or straight-chain of fatty acids. This Aquifex aeolicus (strain VF5) protein is Beta-ketoacyl-[acyl-carrier-protein] synthase III.